Here is a 371-residue protein sequence, read N- to C-terminus: Protein STRICTOSIDINE SYNTHASE-LIKE 6 (371 aa).

Residues 1–21 (MPVFLSSRFLFFCIIVPLLIS) form the signal peptide. 2 N-linked (GlcNAc...) asparagine glycosylation sites follow: Asn-101 and Asn-137. A Phosphotyrosine modification is found at Tyr-303.

This sequence belongs to the strictosidine synthase family.

It localises to the vacuole. The polypeptide is Protein STRICTOSIDINE SYNTHASE-LIKE 6 (Arabidopsis thaliana (Mouse-ear cress)).